A 1314-amino-acid polypeptide reads, in one-letter code: Tetratricopeptide repeat protein 21A (1314 aa).

TPR repeat units follow at residues 110 to 143, 214 to 247, 326 to 359, 494 to 527, 529 to 561, 565 to 598, 616 to 649, 721 to 754, 755 to 788, 790 to 821, 831 to 863, 883 to 916, 918 to 950, 951 to 984, 986 to 1018, 1022 to 1055, 1195 to 1228, 1230 to 1262, and 1264 to 1297; these read STALYYASLFLWFMGHHDKAREYVDHMLKVSSGS, LPALVLKMKLFLARQDWDQTIETGQRILEKDENN, ALVATELGYLFILHQQVKEACLWYKEAMKLEENR, MEPLYVTAQVKFLSGELENAQSTLQRCLELDPTF, DAHLLMSQIYLAQGNFAMCSHCLELGVSHNFQV, PLYHFIKARALNKTGDYAEAIKTLKMIIKVPTSK, ASILLELVEALRLNGELHEATKIMQDAINEFSGT, PHSSLLLGDAFMNIQEPEKALEVYDEAYRKNPHD, ASLVSRIGQAYVKTHQYAKAINYYEAAQKISGQD, LCCELAELLLKLKKYHKAEKVLKQALERDSGV, VKCLLLLAKVYKSHKKEEVMETLNLALDLQSRI, ASICIQIGEHHLAEKDYDSALKSYKDALAYSPTD, KVVLELAHLYLLLGQLDLCEQRCAPLLEMEQTH, ERAAVMLADLMFRRQNYETAINLYHQVLEKAPDN, LVLNKLVDLLRRSGKLEEAPAFFELAKKVSSRV, PGFNYCQGIYFWHIGQPNEALRFLNKARKDSTWG, EKSWLLLADIYCQGGKFDLALELLRRCLQYNKSC, RAYEYMGFIMEKEQSYKDAATNYELAWKYSHQA, and PAIGFKLAFNYLKDKKFVDAIEVCHSVLTEHPKY.

Belongs to the TTC21 family. Interacts with IFT20. Interacts with IFT52. Interacts with IFT140. Interacts with CEP78; regulating IFT20 stability and localization.

Its function is as follows. Intraflagellar transport (IFT)-associated protein required for spermatogenesis. Required for sperm flagellar formation and intraflagellar transport. This Mus musculus (Mouse) protein is Tetratricopeptide repeat protein 21A (Ttc21a).